Reading from the N-terminus, the 1218-residue chain is MRFIVGRAGTGKSTLCRQEIHKESQEHPEGLPLILLVPEQATHQMEMSLAHDPQSGGILRAQVLSFRRLGWRVFSEVGGGGKAVIGEVGKRMLLRRLLLNHRSDLRVFARSATRPGMADLLAQAIAEFKIYRITPDQLRGIEDADELLLQKTHELAFLYEELNKSLGTAARDPDDELNLVAGKISQAPFLQGAKIWVDGFKGFTPQELYVIQAMLGTAAEITVSLPLDPELLKAGTPRFKPGEELFYEPRQTYQGLVDLAREAKASISHVFLTETHRFEKAGLKHLERFYNAYPTQTFPGGDDSTAPDPLGIALFPAANKRAEVEGVARELRRLAREEGRTWRDCSVVTRDLPGYQGIIEQVFNAHEIPYFLDHKRPVIHHPLLELLLSAIETVQKDWAYEPLFRCLKTDFFPCSKDRIDRLENYCLAYGIHGSAWKGNRSWSYYPDPNHKEETAGLNETRQIIYDLFSPFDQAIRPHPEAGGPSVTVAQITEAIYELLIRLKVPEHLQEWAEAAHSRGDLAEAQLQNQIWDAVIQVLDELVAGLGEEVMDLSDFAMILTSGLENLQLGLIPPGYDQVLVGSLDRSRNPETAVLFLLGANDGILPGKPSDEGVFDELERLRLESKGIMLAPKGKVQVYEEQYFIYTALTRAREQLYISYPLTDEEGRGLTVSPVIHRLKMIFPGLPEKYLSLDEEEPGALPHPYALLPAYALHLQKLRQGSSLSPLWQAIRLWFLSQTAAFPQVQLLEKGLRDQNEEGKLPQPLARQLYGKRLVTSVSRLELFARCPFAHFAQYGLKLKERSNYRLSPPDMGQFFHAVLHDYAIALRERGLDWGELSKEQSWQLVNETAEPIALQLQNKILLSNARYRYLTHKLKRTVHHAVRVLGEHARQGVFLPMELEVKFGPQEALPPLEVPLSGGNSLLLRGQIDRIDGAVLGHEIYLRIFDYKSREAHVSLNQIYHGLDLQLLAYLDAALQGAQILVSSSGLAEGSKGSEGSEGSEDSEDSTIHPAGFLYFPVLEPQLKSKTLLYPEQLEKDRIKAVKVKGYLLADRQVLLAMDRDLENSSLLGIKLTKSGEFKKGSPILTEEQFALLRKHLQHFLRCSGEALLEGDISITPYRQGKHTACQFCSYKPLCHFDPYLPENNYRNLPVIQDEEFWQRVQSQDSEQYPEQHPPTSVPGETSRRALQKDGGNSPRGQELIWLGEDEAGAGKEDDGHE.

A UvrD-like helicase ATP-binding domain is found at 1 to 279; the sequence is MRFIVGRAGT…VFLTETHRFE (279 aa). 6 to 13 lines the ATP pocket; it reads GRAGTGKS. Residues 281 to 588 form the UvrD-like helicase C-terminal domain; that stretch reads AGLKHLERFY…LVGSLDRSRN (308 aa). Residue Cys-786 coordinates [4Fe-4S] cluster. A disordered region spans residues 987-1006; the sequence is LAEGSKGSEGSEGSEDSEDS. Cys-1126, Cys-1129, and Cys-1135 together coordinate [4Fe-4S] cluster. The span at 1160–1169 shows a compositional bias: polar residues; sequence RVQSQDSEQY. A disordered region spans residues 1160-1218; that stretch reads RVQSQDSEQYPEQHPPTSVPGETSRRALQKDGGNSPRGQELIWLGEDEAGAGKEDDGHE. Basic and acidic residues predominate over residues 1209-1218; that stretch reads GAGKEDDGHE.

It belongs to the helicase family. AddB/RexB type 1 subfamily. In terms of assembly, heterodimer of AddA and AddB. Mg(2+) serves as cofactor. Requires [4Fe-4S] cluster as cofactor.

The heterodimer acts as both an ATP-dependent DNA helicase and an ATP-dependent, dual-direction single-stranded exonuclease. Recognizes the chi site generating a DNA molecule suitable for the initiation of homologous recombination. The AddB subunit has 5' -&gt; 3' nuclease activity but not helicase activity. This chain is ATP-dependent helicase/deoxyribonuclease subunit B, found in Desulfitobacterium hafniense (strain DSM 10664 / DCB-2).